We begin with the raw amino-acid sequence, 576 residues long: 4-alpha-glucanotransferase, chloroplastic/amyloplastic (576 aa).

A chloroplast-targeting transit peptide spans 1–52 (MAIHTCFSLIPSSFSSPKLPYPKNTTFQSPIPKLSRPTFMFDRKGSFQNGTA).

Belongs to the disproportionating enzyme family. As to expression, present in leaves, stems, roots, and stolons but is most abundant in developing and mature tubers.

It is found in the plastid. It localises to the chloroplast. The protein localises to the amyloplast. It catalyses the reaction Transfers a segment of a (1-&gt;4)-alpha-D-glucan to a new position in an acceptor, which may be glucose or a (1-&gt;4)-alpha-D-glucan.. Functionally, may act during starch breakdown to convert small oligosaccharides into larger molecules upon which starch phosphorylase can act, or may change the structure of starch molecules and grain architecture by modifying chain length, or may generate from starch and glucose oligosaccharides which can serve either as primers for new starch phosphoenzyme. In Solanum tuberosum (Potato), this protein is 4-alpha-glucanotransferase, chloroplastic/amyloplastic (DPEP).